The sequence spans 355 residues: Putative beta-lactamase HcpE (355 aa).

Positions 1–22 (MNIKILKILVGGLFFLSLNAHL) are cleaved as a signal peptide. TPR repeat units follow at residues 27–60 (DNSF…GVSE), 63–96 (TQLG…DDRE), 98–131 (CFGL…LKHP), 132–166 (ESCY…DMAK), 202–240 (GQAC…NNSG), 245–275 (LGSM…MGSA), 276–311 (VSCS…MGDE), and 312–344 (VGCF…GMKQ). 9 disulfide bridges follow: cysteine 54–cysteine 62, cysteine 90–cysteine 98, cysteine 126–cysteine 134, cysteine 160–cysteine 168, cysteine 197–cysteine 205, cysteine 234–cysteine 242, cysteine 270–cysteine 278, cysteine 306–cysteine 314, and cysteine 338–cysteine 346.

The protein belongs to the hcp beta-lactamase family.

It localises to the secreted. It carries out the reaction a beta-lactam + H2O = a substituted beta-amino acid. Its function is as follows. May hydrolyze 6-aminopenicillinic acid and 7-aminocephalosporanic acid (ACA) derivatives. The polypeptide is Putative beta-lactamase HcpE (hcpE) (Helicobacter pylori (strain J99 / ATCC 700824) (Campylobacter pylori J99)).